Here is a 350-residue protein sequence, read N- to C-terminus: Holliday junction branch migration complex subunit RuvB (350 aa).

The tract at residues 1–186 (MAGHEEEDER…FGIPLRLDFY (186 aa)) is large ATPase domain (RuvB-L). Residues Leu25, Arg26, Gly67, Lys70, Thr71, Thr72, 133 to 135 (EDF), Arg176, Tyr186, and Arg223 contribute to the ATP site. Residue Thr71 participates in Mg(2+) binding. Positions 187–257 (ETDELVQIVT…IADAALNRLE (71 aa)) are small ATPAse domain (RuvB-S). The interval 260–350 (GRGLDAMDRR…VQPDLWSDAP (91 aa)) is head domain (RuvB-H). DNA contacts are provided by Arg296, Arg315, and Arg320.

This sequence belongs to the RuvB family. As to quaternary structure, homohexamer. Forms an RuvA(8)-RuvB(12)-Holliday junction (HJ) complex. HJ DNA is sandwiched between 2 RuvA tetramers; dsDNA enters through RuvA and exits via RuvB. An RuvB hexamer assembles on each DNA strand where it exits the tetramer. Each RuvB hexamer is contacted by two RuvA subunits (via domain III) on 2 adjacent RuvB subunits; this complex drives branch migration. In the full resolvosome a probable DNA-RuvA(4)-RuvB(12)-RuvC(2) complex forms which resolves the HJ.

It localises to the cytoplasm. It catalyses the reaction ATP + H2O = ADP + phosphate + H(+). Functionally, the RuvA-RuvB-RuvC complex processes Holliday junction (HJ) DNA during genetic recombination and DNA repair, while the RuvA-RuvB complex plays an important role in the rescue of blocked DNA replication forks via replication fork reversal (RFR). RuvA specifically binds to HJ cruciform DNA, conferring on it an open structure. The RuvB hexamer acts as an ATP-dependent pump, pulling dsDNA into and through the RuvAB complex. RuvB forms 2 homohexamers on either side of HJ DNA bound by 1 or 2 RuvA tetramers; 4 subunits per hexamer contact DNA at a time. Coordinated motions by a converter formed by DNA-disengaged RuvB subunits stimulates ATP hydrolysis and nucleotide exchange. Immobilization of the converter enables RuvB to convert the ATP-contained energy into a lever motion, pulling 2 nucleotides of DNA out of the RuvA tetramer per ATP hydrolyzed, thus driving DNA branch migration. The RuvB motors rotate together with the DNA substrate, which together with the progressing nucleotide cycle form the mechanistic basis for DNA recombination by continuous HJ branch migration. Branch migration allows RuvC to scan DNA until it finds its consensus sequence, where it cleaves and resolves cruciform DNA. The polypeptide is Holliday junction branch migration complex subunit RuvB (Rhodospirillum rubrum (strain ATCC 11170 / ATH 1.1.1 / DSM 467 / LMG 4362 / NCIMB 8255 / S1)).